The sequence spans 382 residues: Methylthioribose-1-phosphate isomerase (382 aa).

Aspartate 261 (proton donor) is an active-site residue.

It belongs to the eIF-2B alpha/beta/delta subunits family. MtnA subfamily.

It is found in the cytoplasm. Its subcellular location is the nucleus. It catalyses the reaction 5-(methylsulfanyl)-alpha-D-ribose 1-phosphate = 5-(methylsulfanyl)-D-ribulose 1-phosphate. It participates in amino-acid biosynthesis; L-methionine biosynthesis via salvage pathway; L-methionine from S-methyl-5-thio-alpha-D-ribose 1-phosphate: step 1/6. In terms of biological role, catalyzes the interconversion of methylthioribose-1-phosphate (MTR-1-P) into methylthioribulose-1-phosphate (MTRu-1-P). This is Methylthioribose-1-phosphate isomerase from Ricinus communis (Castor bean).